The chain runs to 168 residues: DAZ-associated protein 2 (168 aa).

A compositionally biased stretch (low complexity) spans 1-13; that stretch reads MNSKGQYPTQPTY. Residues 1–25 are disordered; the sequence is MNSKGQYPTQPTYPVQPPGNPVYPQ. The PPAY signature appears at 39–42; sequence PPAY. Serine 77 carries the phosphoserine modification.

In terms of assembly, interacts with SOX6. Interacts with DAZ1 and DAZL. Interacts with IL17RB. May interact with FAM168B. Interacts with INCA1. Interacts with EIF4G1 and EIF4G2. Interacts (via PPAY motif) with NEDD4 (via WW domains). Interacts with transcription factor TCF4; the interaction results in localization of DAZAP2 to the nucleus. Interacts with transcription factors TCF7 and TCF7L1. Interacts with transcription factor LEF1. Interacts with serine/threonine-protein kinase HIPK2; the interaction results in phosphorylation of DAZAP2 which causes localization of DAZAP2 to the nucleus, reduces interaction of DAZAP2 with HIPK2 and prevents DAZAP2-dependent degradation of HIPK2. Interacts with ubiquitin ligase SIAH1; the interaction is decreased following phosphorylation of DAZAP2 by HIPK2. Interacts with TP53; the interaction is triggered by DNA damage. Ubiquitinated by SMURF2, leading to proteasomal degradation. Ubiquitinated by NEDD4, leading to proteasomal degradation. In terms of processing, following DNA damage, phosphorylated by HIPK2 which promotes DAZAP2 localization to the nucleus, reduces interaction of DAZAP2 with HIPK2 and SIAH1, and prevents DAZAP2-dependent ubiquitination of HIPK2 by E3 ubiquitin-protein ligase SIAH1 and subsequent HIPK2 proteasomal degradation.

The protein localises to the cytoplasm. It is found in the nucleus. The protein resides in the nucleus speckle. It localises to the nuclear body. Its subcellular location is the stress granule. In terms of biological role, in unstressed cells, promotes SIAH1-mediated polyubiquitination and degradation of the serine/threonine-protein kinase HIPK2, probably by acting as a loading factor that potentiates complex formation between HIPK2 and ubiquitin ligase SIAH1. In response to DNA damage, localizes to the nucleus following phosphorylation by HIPK2 and modulates the expression of a subset of TP53/p53 target genes by binding to TP53 at target gene promoters. This limits the expression of a number of cell death-mediating TP53 target genes, reducing DNA damage-induced cell death. Enhances the binding of transcription factor TCF7L2/TCF4, a Wnt signaling pathway effector, to the promoters of target genes. Plays a role in stress granule formation. This chain is DAZ-associated protein 2, found in Bos taurus (Bovine).